The primary structure comprises 728 residues: tRNA (guanine(27)-N(2))-dimethyltransferase (728 aa).

Acidic residues predominate over residues 1 to 10; that stretch reads MENMAEEELL. 2 disordered regions span residues 1-78 and 98-118; these read MENM…SKRH and DVDSASSLNSDNPGTENSQTC. T23 bears the Phosphothreonine mark. The span at 23-33 shows a compositional bias: pro residues; that stretch reads TPAPDSAPVPA. Low complexity predominate over residues 34–46; that stretch reads PAADTALDSAPTP. A compositionally biased stretch (pro residues) spans 47–61; the sequence is DSDPAPALAPAPAPA. S63 carries the post-translational modification Phosphoserine. Residues 101 to 118 are compositionally biased toward polar residues; it reads SASSLNSDNPGTENSQTC. The Nucleolar localization signal motif lies at 132–136; sequence HKLRR. The C2H2-type zinc finger occupies 181–203; that stretch reads YHCIICSATITRRTDMLGHVKRH. The 460-residue stretch at 224–683 folds into the Trm1 methyltransferase domain; the sequence is EILKETDTDI…APLMQFKSIL (460 aa). 4 residues coordinate S-adenosyl-L-methionine: R257, D304, D352, and A353. Zn(2+) is bound by residues C483, C486, C508, and C510. A Glycyl lysine isopeptide (Lys-Gly) (interchain with G-Cter in SUMO2) cross-link involves residue K580. Position 607 is a phosphoserine (S607). The segment at 693 to 728 is disordered; that stretch reads GAQSEGQMPPAAEDTVTDRVEMSVSDKAEASGCRRW. A compositionally biased stretch (basic and acidic residues) spans 708–721; the sequence is VTDRVEMSVSDKAE.

The protein belongs to the class I-like SAM-binding methyltransferase superfamily. Trm1 family. In terms of tissue distribution, expressed in various neuronal structures during embryonic development, including spinal ganglia, trigeminal nerve and ganglion, olfactory and nasopharyngeal epithelium, nuclei of the metencephalon, thalamus and medulla oblongata. Also expressed in lung, esophagus, epiglottis, ependyma, vertebral column, spinal cord and brown adipose tissue. Expression persists in the adult brain with dynamically changing patterns in cortex and cerebellum.

It is found in the nucleus. The protein resides in the nucleolus. It carries out the reaction guanosine(27) in tRNA(Tyr) + 2 S-adenosyl-L-methionine = N(2)-dimethylguanosine(27) in tRNA(Tyr) + 2 S-adenosyl-L-homocysteine + 2 H(+). Functionally, specifically dimethylates a single guanine residue at position 27 of tRNA(Tyr) using S-adenosyl-L-methionine as donor of the methyl groups. Dimethylation at position 27 of tRNA(Tyr) is required for efficient translation of tyrosine codons. Also required to maintain 3-(3-amino-3-carboxypropyl)uridine (acp3U) in the D-loop of several cytoplasmic tRNAs. May play a role in motor coordination and exploratory behavior. In Mus musculus (Mouse), this protein is tRNA (guanine(27)-N(2))-dimethyltransferase.